Consider the following 733-residue polypeptide: MTDDSTCPVTGGADKQVTGRGQSYRDWWPNQPNLRVLSQHSPRSNPMGGEFNYAEEFKKLDFAAVKADLRALMTSSQEWWPADFGHYGPLFIRMAWHSAGTYRTLDGRGGAGSGQQRFPPLNSWPDNVNLDKARRLLWPIKKKYGRKISWADLMILAGNVALESMGFETFGFAGGRVDTWEPDEDVYWGSENTWLGDKRYSGDRKLENPLAAVQMGLIYVNPEGPNGKPDPVAAAKDIRETFARMAMNDEETVALIAGGHSFGKTHGAGPASHVGPEPEAAPIEQQGLGWKSSFGTGKGGDAIGSGLEVTWTSTPTKWSNNFFRILFSYEWELTKSPAGAYQWQPKDGAGAGTIPDAHDKNKRRAPTMLTTDLSLRFDPVYEKISRHFYENPDQLADAFARAWFKLTHRDMGPRTRYLGPEVPKEALIWQDPIPAVNHTLIGPREITFLKRKILASGLSIPELVLTAWASASTFRGSDKRGGANGARIRLAPQKDWEVNEPARLRKVLAVLEGIQQEFNKTATGGKKVSLADLIVLAGCAGVWKAAKNGGHKVTVPFTPGRMDATQEQTDVNSFAVLEPKADGFRNYLKGPYAVSAEELLVDKAQLLTLSAPEMTVLIGGLRVIGATYGQATHGVFTTLPGALTNDFFTHLLDMGTEWKPVAGNPDVFEGSDRKTGEPKWTGTRVDLIFGANAQLRAIAEVYASADGEEKFAQDFVAAWAKVMNLDRFDLAQK.

A disordered region spans residues 1–24 (MTDDSTCPVTGGADKQVTGRGQSY). A cross-link (tryptophyl-tyrosyl-methioninium (Trp-Tyr) (with M-245)) is located at residues 96 to 219 (WHSAGTYRTL…LAAVQMGLIY (124 aa)). The active-site Proton acceptor is the His97. Positions 219-245 (YVNPEGPNGKPDPVAAAKDIRETFARM) form a cross-link, tryptophyl-tyrosyl-methioninium (Tyr-Met) (with W-96). His260 serves as a coordination point for heme b.

The protein belongs to the peroxidase family. Peroxidase/catalase subfamily. As to quaternary structure, homodimer or homotetramer. Heme b serves as cofactor. Formation of the three residue Trp-Tyr-Met cross-link is important for the catalase, but not the peroxidase activity of the enzyme.

The catalysed reaction is H2O2 + AH2 = A + 2 H2O. The enzyme catalyses 2 H2O2 = O2 + 2 H2O. Bifunctional enzyme with both catalase and broad-spectrum peroxidase activity. The polypeptide is Catalase-peroxidase (Methanoregula boonei (strain DSM 21154 / JCM 14090 / 6A8)).